A 435-amino-acid polypeptide reads, in one-letter code: Putative F-box/FBD/LRR-repeat protein At5g56810 (435 aa).

One can recognise an F-box domain in the interval 14–62 (PDRISQLPNDLLFRILSLIPVSDAMSTSLLSKRWKSVWKMLPTLVYNEN). 6 LRR repeats span residues 64 to 95 (CSNI…TLEL), 146 to 173 (LKLQ…YLTC), 174 to 199 (VNFE…FLQR), 222 to 248 (KEQA…NIFD), 266 to 291 (SVRV…SLDL), and 316 to 341 (YDNF…KLNH). In terms of domain architecture, FBD spans 353 to 404 (CSVSEPSSVPECLSFHLETFQWIGYAGTFEEIAAAVYVLKNARCLKNATISL).

This is Putative F-box/FBD/LRR-repeat protein At5g56810 from Arabidopsis thaliana (Mouse-ear cress).